The sequence spans 508 residues: MKKVVIDGNNLTIEDVVKVARDKWEVVLSEVAKERIVHSREIVDRYVKEGKVVYGITTGFGKFSDVVISKEDTEALQKNLIMSHSCAVGDPLPEEVVRAIMLLRANALAKGFSGVRLETVETLIEMINKNVVPVIPEKGSLGASGDLAPLAHMVLVMIGRGEAFYAGERVSGEEAMRRAGIPTITLSSKEGLALINGTQVMSALGCLNVYDAKRIIAVADAVASITLEALRGIIDAFDDRVQMVRPHKGQIVSAKNVRKMVEGSELITRQGEIRVQDAYTLRCIPQVHGAVRDAISYIERVLGVEINSATDNPLIFPDDGEVISGGNFHGEPVALAMDFLSIALSEIANISERRIERLVNYQLNDLPPFLTEKGGLNSGMMIAQYTAASLVSENKVLSHPASVDSIPSSANQEDHVSMGTIAARKAREVLKNVTTVLAIELLTASQALEFRKGFKRGKGTDRIYRLVREKVNPLVEDRELYIDINACFDIIRSGRIEEVLKEEGIMLE.

The segment at residues Ala143–Gly145 is a cross-link (5-imidazolinone (Ala-Gly)). A 2,3-didehydroalanine (Ser) modification is found at Ser144.

It belongs to the PAL/histidase family. In terms of processing, contains an active site 4-methylidene-imidazol-5-one (MIO), which is formed autocatalytically by cyclization and dehydration of residues Ala-Ser-Gly.

It is found in the cytoplasm. It catalyses the reaction L-histidine = trans-urocanate + NH4(+). The protein operates within amino-acid degradation; L-histidine degradation into L-glutamate; N-formimidoyl-L-glutamate from L-histidine: step 1/3. This is Histidine ammonia-lyase from Caldanaerobacter subterraneus subsp. tengcongensis (strain DSM 15242 / JCM 11007 / NBRC 100824 / MB4) (Thermoanaerobacter tengcongensis).